The chain runs to 302 residues: UDP-N-acetylenolpyruvoylglucosamine reductase (302 aa).

The region spanning 31–196 is the FAD-binding PCMH-type domain; the sequence is KIGGPADVLA…LRAWISLERG (166 aa). The active site involves R175. The active-site Proton donor is S225. E295 is a catalytic residue.

Belongs to the MurB family. It depends on FAD as a cofactor.

The protein resides in the cytoplasm. The enzyme catalyses UDP-N-acetyl-alpha-D-muramate + NADP(+) = UDP-N-acetyl-3-O-(1-carboxyvinyl)-alpha-D-glucosamine + NADPH + H(+). Its pathway is cell wall biogenesis; peptidoglycan biosynthesis. Functionally, cell wall formation. This is UDP-N-acetylenolpyruvoylglucosamine reductase from Caldanaerobacter subterraneus subsp. tengcongensis (strain DSM 15242 / JCM 11007 / NBRC 100824 / MB4) (Thermoanaerobacter tengcongensis).